The sequence spans 357 residues: LINE-1 retrotransposable element ORF1 protein (357 aa).

A disordered region spans residues 1–40; sequence MAKGKRKNPTNRNQDHSPSSERSTPTPPSPGHPNTTENLD. Residues 59-156 adopt a coiled-coil conformation; the sequence is HKSLKDLQES…IENIDTTVKE (98 aa). The segment at 179 to 274 is RNA recognition motif (RRM) domain; it reads NLRIIGIDEN…KGRPIRITPD (96 aa). Positions 278 to 339 are C-terminal domain (CTD); the sequence is ETMKARRAWT…STNPALQRII (62 aa).

The protein belongs to the transposase 22 family. As to quaternary structure, homotrimer (via coiled coil domain). May also form larger homooligomers. Interacts with Tex19.1 and UBR2. Interacts with MOV10. Polyubiquitinated, probably by UBR2, which induces its degradation. As to expression, expressed in meiotic spermatocytes and in the cerebellum (at protein level).

The protein resides in the nucleus. The protein localises to the nucleolus. It localises to the cytoplasm. Its subcellular location is the cytoplasmic ribonucleoprotein granule. It is found in the stress granule. Functionally, nucleic acid-binding protein which is essential for retrotransposition of LINE-1 elements in the genome. Functions as a nucleic acid chaperone binding its own transcript and therefore preferentially mobilizing the transcript from which they are encoded. This chain is LINE-1 retrotransposable element ORF1 protein, found in Mus musculus (Mouse).